Reading from the N-terminus, the 454-residue chain is Probable spastin homolog Bm1_53365 (454 aa).

218–225 is a binding site for ATP; the sequence is GPPGNGKT.

The protein belongs to the AAA ATPase family. Spastin subfamily. Homohexamer. The homohexamer is stabilized by ATP-binding. The homohexamer may adopt a ring conformation through which microtubules pass prior to being severed. Interacts with microtubules.

It is found in the cytoplasm. Its subcellular location is the cytoskeleton. It localises to the perinuclear region. It catalyses the reaction n ATP + n H2O + a microtubule = n ADP + n phosphate + (n+1) alpha/beta tubulin heterodimers.. Severs microtubules, probably in an ATP-dependent fashion. In Brugia malayi (Filarial nematode worm), this protein is Probable spastin homolog Bm1_53365.